The following is a 310-amino-acid chain: Probable manganese-dependent inorganic pyrophosphatase (310 aa).

Residues histidine 9, aspartate 13, aspartate 15, aspartate 76, histidine 98, and aspartate 150 each contribute to the Mn(2+) site.

This sequence belongs to the PPase class C family. The cofactor is Mn(2+).

The protein localises to the cytoplasm. The catalysed reaction is diphosphate + H2O = 2 phosphate + H(+). In Streptococcus thermophilus (strain CNRZ 1066), this protein is Probable manganese-dependent inorganic pyrophosphatase.